Here is a 451-residue protein sequence, read N- to C-terminus: MPREIITLQLGQCGNQIGFEFWKQLCAEHGISPEGIVEEFATEGTDRKDVFFYQADDEHYIPRAVLLDLEPRVIHSILNSSYAKLYNPENIYLSEHGGGAGNNWASGFSQGEKIHEDIFDIIDREADGSDSLEGFVLCHSIAGGTGSGLGSYLLERLNDRYPKKLVQTYSVFPNQDEMSDVVVQPYNSLLTLKRLTQNADCVVVLDNTALNLIATDRLHIQNPSFSQINQLVSTIMSASTTTLRYPGYMNNDLIGLIASLIPTPRLHFLMTGYTPLTTDQSVASVRKTTVLDVMRRLLQPKNVMVSTGRDRQTNHCYIAILNIIQGEVDPTQVHKSLQRIRERKLANFIPWGPASIQVALSRKSPYLPSAHRVSGLMMANHTSISSLFERTCRQFDKLRKREAFMEQFRKEDIFKDNFDEMDTSREIVQQLIDEYHAATRPDYISWGTQEQ.

The residue at position 131 (Ser-131) is a Phosphoserine; by BRSK1. 142-148 (AGGTGSG) contacts GTP.

Belongs to the tubulin family. As to quaternary structure, component of the gamma-tubulin ring complex (gTuRC) consisting of TUBGCP2, TUBGCP3, TUBGCP4, TUBGCP5 and TUBGCP6 and gamma-tubulin TUBG1 or TUBG2. TUBGCP2, TUBGCP3, TUBGCP4, TUBGCP5 and TUBGCP6 assemble in a 5:5:2:1:1 stoichiometry; each is associated with a gamma-tubulin, thereby arranging 14 gamma-tubulins in a helical manner. Gamma-tubulin at the first position is blocked by TUBGCP3 at the last position, allowing 13 protafilaments to grow into a microtubule. The gTuRC (via TUBGCP3 and TUBGCP6) interacts with ACTB and MZT1; the interactions form a luminal bridge that stabilizes the initial structure during complex assembly. The gTuRC (via TUBGCP2) interacts with MZT2A/MZT2B and CDK5RAP2 (via CM1 motif); the interactions play a role in gTuRC activation. Interacts with alpha-beta tubulin heterodimers; the interaction allows microtubules to nucleate from the gTuRC. Interacts with B9D2. Interacts with CDK5RAP2; the interaction is leading to centrosomal localization of TUBG1 and CDK5RAP2. Interacts with CIMAP3. Interacts with SAS6 and NUP62 at the centrosome. Interacts with EML3 (phosphorylated at 'Thr-881') and HAUS8. Interacts with DNM2; this interaction may participate in centrosome cohesion. Interacts with CCDC66. Phosphorylation at Ser-131 by BRSK1 regulates centrosome duplication, possibly by mediating relocation of gamma-tubulin and its associated proteins from the cytoplasm to the centrosome.

The protein resides in the cytoplasm. Its subcellular location is the cytoskeleton. It localises to the microtubule organizing center. It is found in the centrosome. The protein localises to the spindle. Functionally, tubulin is the major constituent of microtubules, protein filaments consisting of alpha- and beta-tubulin heterodimers. Gamma-tubulin is a key component of the gamma-tubulin ring complex (gTuRC) which mediates microtubule nucleation. The gTuRC regulates the minus-end nucleation of alpha-beta tubulin heterodimers that grow into microtubule protafilaments, a critical step in centrosome duplication and spindle formation. The chain is Tubulin gamma-1 chain from Mus musculus (Mouse).